The following is a 287-amino-acid chain: Thymidylate synthase (287 aa).

DUMP is bound at residue arginine 21. Residue asparagine 51 coordinates (6R)-5,10-methylene-5,6,7,8-tetrahydrofolate. Residue 150 to 151 (RR) coordinates dUMP. Catalysis depends on cysteine 170, which acts as the Nucleophile. DUMP contacts are provided by residues 190-193 (RSGD), asparagine 201, and 231-233 (HIY). Aspartate 193 is a binding site for (6R)-5,10-methylene-5,6,7,8-tetrahydrofolate. Position 286 (alanine 286) interacts with (6R)-5,10-methylene-5,6,7,8-tetrahydrofolate.

It belongs to the thymidylate synthase family. Bacterial-type ThyA subfamily. Homodimer.

It localises to the cytoplasm. It catalyses the reaction dUMP + (6R)-5,10-methylene-5,6,7,8-tetrahydrofolate = 7,8-dihydrofolate + dTMP. Its pathway is pyrimidine metabolism; dTTP biosynthesis. In terms of biological role, catalyzes the reductive methylation of 2'-deoxyuridine-5'-monophosphate (dUMP) to 2'-deoxythymidine-5'-monophosphate (dTMP) while utilizing 5,10-methylenetetrahydrofolate (mTHF) as the methyl donor and reductant in the reaction, yielding dihydrofolate (DHF) as a by-product. This enzymatic reaction provides an intracellular de novo source of dTMP, an essential precursor for DNA biosynthesis. The chain is Thymidylate synthase from Mycoplasma genitalium (strain ATCC 33530 / DSM 19775 / NCTC 10195 / G37) (Mycoplasmoides genitalium).